Here is an 885-residue protein sequence, read N- to C-terminus: Dual serine/threonine and tyrosine protein kinase (885 aa).

Positions 614–868 constitute a Protein kinase domain; sequence PKLGRELGRG…PLLGIVQPGL (255 aa). Residues 620-628 and lysine 643 contribute to the ATP site; that span reads LGRGQYGVV. The active-site Proton acceptor is the aspartate 739.

The protein belongs to the protein kinase superfamily. Ser/Thr protein kinase family.

It localises to the cytoplasm. It is found in the cell membrane. The protein resides in the apical cell membrane. Its subcellular location is the basolateral cell membrane. The protein localises to the cell junction. It carries out the reaction L-seryl-[protein] + ATP = O-phospho-L-seryl-[protein] + ADP + H(+). The catalysed reaction is L-threonyl-[protein] + ATP = O-phospho-L-threonyl-[protein] + ADP + H(+). The enzyme catalyses L-tyrosyl-[protein] + ATP = O-phospho-L-tyrosyl-[protein] + ADP + H(+). Its function is as follows. May act as a positive regulator of ERK phosphorylation downstream of fibroblast growth factor-receptor activation. May induce both caspase-dependent apoptosis and caspase-independent cell death. Plays a role in the embryonic development. The chain is Dual serine/threonine and tyrosine protein kinase (dstyk) from Danio rerio (Zebrafish).